Reading from the N-terminus, the 82-residue chain is Exodeoxyribonuclease 7 small subunit (82 aa).

This sequence belongs to the XseB family. In terms of assembly, heterooligomer composed of large and small subunits.

It localises to the cytoplasm. It carries out the reaction Exonucleolytic cleavage in either 5'- to 3'- or 3'- to 5'-direction to yield nucleoside 5'-phosphates.. In terms of biological role, bidirectionally degrades single-stranded DNA into large acid-insoluble oligonucleotides, which are then degraded further into small acid-soluble oligonucleotides. The chain is Exodeoxyribonuclease 7 small subunit from Pectobacterium carotovorum subsp. carotovorum (strain PC1).